The following is a 322-amino-acid chain: Protease HtpX homolog (322 aa).

2 helical membrane-spanning segments follow: residues 19–39 and 61–81; these read ILLI…CYLL and FINL…IAYF. Residue His-165 participates in Zn(2+) binding. Residue Glu-166 is part of the active site. His-169 provides a ligand contact to Zn(2+). 2 helical membrane passes run 175–195 and 216–236; these read VRLL…AQIA and ILIL…ATLM. Glu-245 serves as a coordination point for Zn(2+).

This sequence belongs to the peptidase M48B family. It depends on Zn(2+) as a cofactor.

The protein resides in the cell inner membrane. The polypeptide is Protease HtpX homolog (Bacteroides fragilis (strain ATCC 25285 / DSM 2151 / CCUG 4856 / JCM 11019 / LMG 10263 / NCTC 9343 / Onslow / VPI 2553 / EN-2)).